Here is a 290-residue protein sequence, read N- to C-terminus: Arylamine N-acetyltransferase 1 (290 aa).

N-acetylmethionine is present on M1. S103 contacts CoA. 106–107 contacts substrate; sequence IH. A CoA-binding site is contributed by Y208.

The protein belongs to the arylamine N-acetyltransferase family.

The protein localises to the cytoplasm. It catalyses the reaction an arylamine + acetyl-CoA = an N-acetylarylamine + CoA. Its function is as follows. Participates in the detoxification of a plethora of hydrazine and arylamine drugs. In Bos taurus (Bovine), this protein is Arylamine N-acetyltransferase 1 (NAT1).